The following is a 94-amino-acid chain: Large ribosomal subunit protein uL23 (94 aa).

Belongs to the universal ribosomal protein uL23 family. Part of the 50S ribosomal subunit. Contacts protein L29, and trigger factor when it is bound to the ribosome.

Functionally, one of the early assembly proteins it binds 23S rRNA. One of the proteins that surrounds the polypeptide exit tunnel on the outside of the ribosome. Forms the main docking site for trigger factor binding to the ribosome. The polypeptide is Large ribosomal subunit protein uL23 (Lysinibacillus sphaericus (strain C3-41)).